The primary structure comprises 65 residues: Large ribosomal subunit protein uL29 (65 aa).

It belongs to the universal ribosomal protein uL29 family.

This is Large ribosomal subunit protein uL29 from Buchnera aphidicola subsp. Schizaphis graminum (strain Sg).